The chain runs to 473 residues: Siroheme synthase (473 aa).

Positions 1–203 are precorrin-2 dehydrogenase /sirohydrochlorin ferrochelatase; it reads MTLFPIFADL…QQPGLAEQEL (203 aa). NAD(+) contacts are provided by residues 22–23 and 43–44; these read AV and PR. Ser128 is subject to Phosphoserine. A uroporphyrinogen-III C-methyltransferase region spans residues 216–473; it reads GSVVLVGAGP…GLPGPQALAA (258 aa). An S-adenosyl-L-methionine-binding site is contributed by Pro225. The active-site Proton acceptor is Asp248. Lys270 serves as the catalytic Proton donor. S-adenosyl-L-methionine contacts are provided by residues 302–304, Ile307, 332–333, Met384, and Gly413; these read GGD and TA.

The protein in the N-terminal section; belongs to the precorrin-2 dehydrogenase / sirohydrochlorin ferrochelatase family. It in the C-terminal section; belongs to the precorrin methyltransferase family.

It carries out the reaction uroporphyrinogen III + 2 S-adenosyl-L-methionine = precorrin-2 + 2 S-adenosyl-L-homocysteine + H(+). The catalysed reaction is precorrin-2 + NAD(+) = sirohydrochlorin + NADH + 2 H(+). It catalyses the reaction siroheme + 2 H(+) = sirohydrochlorin + Fe(2+). It functions in the pathway cofactor biosynthesis; adenosylcobalamin biosynthesis; precorrin-2 from uroporphyrinogen III: step 1/1. The protein operates within cofactor biosynthesis; adenosylcobalamin biosynthesis; sirohydrochlorin from precorrin-2: step 1/1. It participates in porphyrin-containing compound metabolism; siroheme biosynthesis; precorrin-2 from uroporphyrinogen III: step 1/1. Its pathway is porphyrin-containing compound metabolism; siroheme biosynthesis; siroheme from sirohydrochlorin: step 1/1. It functions in the pathway porphyrin-containing compound metabolism; siroheme biosynthesis; sirohydrochlorin from precorrin-2: step 1/1. In terms of biological role, multifunctional enzyme that catalyzes the SAM-dependent methylations of uroporphyrinogen III at position C-2 and C-7 to form precorrin-2 via precorrin-1. Then it catalyzes the NAD-dependent ring dehydrogenation of precorrin-2 to yield sirohydrochlorin. Finally, it catalyzes the ferrochelation of sirohydrochlorin to yield siroheme. This is Siroheme synthase from Bordetella parapertussis (strain 12822 / ATCC BAA-587 / NCTC 13253).